Consider the following 352-residue polypeptide: C-C chemokine receptor type 5 (352 aa).

Residues 1–30 (MDYQVSSPTYDIDYYTSEPCQKVNVKQIAA) are Extracellular-facing. Tyrosine 3 bears the Sulfotyrosine mark. Serine 6 and serine 7 each carry an O-linked (GalNAc...) serine glycan. Tyrosine 10, tyrosine 14, and tyrosine 15 each carry sulfotyrosine. Disulfide bonds link cysteine 20–cysteine 269 and cysteine 101–cysteine 178. The helical transmembrane segment at 31–58 (RLLPPLYSLVFIFGFVGNILVVLILINC) threads the bilayer. Residues 59–68 (KRLKSMTDIY) lie on the Cytoplasmic side of the membrane. The helical transmembrane segment at 69–89 (LLNLAISDLFFLLTVPFWAHY) threads the bilayer. At 90 to 102 (AAAQWDFGNTMCQ) the chain is on the extracellular side. Residues 103–124 (LLTGLYFIGFFSGIFFIILLTI) form a helical membrane-spanning segment. Residues 125 to 141 (DRYLAIVHAVFALKART) are Cytoplasmic-facing. The chain crosses the membrane as a helical span at residues 142–166 (VTFGVVTSVITWVVAVFASLPGIIF). Residues 167–198 (TRSQREGLHYTCSSHFPYSQYQFWKNFQTLKI) lie on the Extracellular side of the membrane. A helical membrane pass occupies residues 199-218 (VILGLVLPLLIMVICYSGIL). The Cytoplasmic portion of the chain corresponds to 219 to 235 (KTLLRCRNEKKRHRAVR). Residues 236–260 (LIFTIMIVYFLFWAPYNIVLLLNTF) traverse the membrane as a helical segment. Over 261-277 (QEFFGLNNCSSSNRLDQ) the chain is Extracellular. A helical membrane pass occupies residues 278–301 (AMQVTETLGMTHCCINPIIYAFVG). At 302–352 (EKFRNYLLVFFQKHIAKRFCKCCSIFQQEAPERASSVYTRSTGEHEISVGL) the chain is on the cytoplasmic side. S-palmitoyl cysteine attachment occurs at residues cysteine 321, cysteine 323, and cysteine 324. Residues serine 336, serine 337, serine 342, and serine 349 each carry the phosphoserine; by BARK1 modification.

The protein belongs to the G-protein coupled receptor 1 family. In terms of assembly, interacts with PRAF2. Efficient ligand binding to CCL3/MIP-1alpha and CCL4/MIP-1beta requires sulfation, O-glycosylation and sialic acid modifications. Glycosylation on Ser-6 is required for efficient binding of CCL4. Interacts with GRK2. Interacts with ARRB1 and ARRB2. Interacts with CNIH4. Interacts with S100A4; this interaction stimulates T-lymphocyte chemotaxis. Post-translationally, sulfated on at least 2 of the N-terminal tyrosines. Sulfation is required for efficient binding of the chemokines, CCL3 and CCL4. In terms of processing, palmitoylation in the C-terminal is important for cell surface expression. Phosphorylation on serine residues in the C-terminal is stimulated by binding CC chemokines especially by APO-RANTES. Post-translationally, O-glycosylated, but not N-glycosylated. Ser-6 appears to be the major site even if Ser-7 may be also O-glycosylated. Also sialylated glycans present which contribute to chemokine binding. Thr-16 and Ser-17 may also be glycosylated and, if so, with small moieties such as a T-antigen.

It is found in the cell membrane. Functionally, receptor for a number of inflammatory CC-chemokines including CCL3/MIP-1-alpha, CCL4/MIP-1-beta and RANTES and subsequently transduces a signal by increasing the intracellular calcium ion level. May play a role in the control of granulocytic lineage proliferation or differentiation. Participates in T-lymphocyte migration to the infection site by acting as a chemotactic receptor. This chain is C-C chemokine receptor type 5 (CCR5), found in Pygathrix nemaeus (Red-shanked douc langur).